We begin with the raw amino-acid sequence, 414 residues long: Alanine--glyoxylate aminotransferase (414 aa).

A mitochondrion-targeting transit peptide spans 1-23 (MFRALARASATLGPQVAGWARTM). K231 carries the N6-(pyridoxal phosphate)lysine modification. K247 carries the N6-acetyllysine; alternate modification. At K247 the chain carries N6-succinyllysine; alternate. K256 and K334 each carry N6-acetyllysine. R382 serves as a coordination point for substrate. Positions 412–414 (NKL) match the Microbody targeting signal motif.

The protein belongs to the class-V pyridoxal-phosphate-dependent aminotransferase family. Homodimer. It depends on pyridoxal 5'-phosphate as a cofactor.

The protein localises to the peroxisome. It is found in the mitochondrion matrix. It carries out the reaction L-serine + pyruvate = 3-hydroxypyruvate + L-alanine. The catalysed reaction is glyoxylate + L-alanine = glycine + pyruvate. Its function is as follows. Catalyzes the transamination of glyoxylate to glycine and contributes to the glyoxylate detoxification. Catalyzes the transamination between L-serine and pyruvate and contributes to gluconeogenesis from the L-serine metabolism. The chain is Alanine--glyoxylate aminotransferase from Felis catus (Cat).